Reading from the N-terminus, the 150-residue chain is Large ribosomal subunit protein bL9 (150 aa).

This sequence belongs to the bacterial ribosomal protein bL9 family.

Its function is as follows. Binds to the 23S rRNA. This chain is Large ribosomal subunit protein bL9, found in Shewanella piezotolerans (strain WP3 / JCM 13877).